We begin with the raw amino-acid sequence, 558 residues long: Dimethylaniline monooxygenase [N-oxide-forming] 4 (558 aa).

Residues 9–13 (GAGVS), E32, and 40–41 (LW) contribute to the FAD site. Residues 60–61 (TN) and 195–198 (TGGD) contribute to the NADP(+) site. Residues 517-537 (AWGAPVLLASLLLICKSSLFL) traverse the membrane as a helical segment.

Belongs to the FMO family. It depends on FAD as a cofactor. Liver.

It localises to the microsome membrane. The protein localises to the endoplasmic reticulum membrane. It carries out the reaction N,N-dimethylaniline + NADPH + O2 + H(+) = N,N-dimethylaniline N-oxide + NADP(+) + H2O. Its function is as follows. This protein is involved in the oxidative metabolism of a variety of xenobiotics such as drugs and pesticides. The chain is Dimethylaniline monooxygenase [N-oxide-forming] 4 (FMO4) from Homo sapiens (Human).